The sequence spans 118 residues: Evasin P546 (118 aa).

The signal sequence occupies residues Met1 to Ala21. Intrachain disulfides connect Cys38–Cys59, Cys55–Cys96, Cys72–Cys101, and Cys91–Cys110. N-linked (GlcNAc...) asparagine glycosylation occurs at Asn45.

It localises to the secreted. Salivary chemokine-binding protein which binds to host chemokines CCL1, CCL3, CCL5 and CCL22. The sequence is that of Evasin P546 from Amblyomma cajennense (Cayenne tick).